We begin with the raw amino-acid sequence, 179 residues long: Transthyretin-like protein 46 (179 aa).

A signal peptide spans 1-17 (MNKLFVLLIALLGLTAA). The disordered stretch occupies residues 144–179 (RRGGFNADYMDPDNSEKDQSKSSEESEDKEKTVETF). The span at 157 to 179 (NSEKDQSKSSEESEDKEKTVETF) shows a compositional bias: basic and acidic residues.

It belongs to the nematode transthyretin-like family.

It localises to the secreted. The protein is Transthyretin-like protein 46 (ttr-46) of Caenorhabditis elegans.